Here is a 440-residue protein sequence, read N- to C-terminus: Trigger factor (440 aa).

Positions 163–248 (GDTVVIDFKG…VHEVKTKELP (86 aa)) constitute a PPIase FKBP-type domain.

Belongs to the FKBP-type PPIase family. Tig subfamily.

The protein localises to the cytoplasm. It catalyses the reaction [protein]-peptidylproline (omega=180) = [protein]-peptidylproline (omega=0). In terms of biological role, involved in protein export. Acts as a chaperone by maintaining the newly synthesized protein in an open conformation. Functions as a peptidyl-prolyl cis-trans isomerase. The chain is Trigger factor from Lactiplantibacillus plantarum (strain ATCC BAA-793 / NCIMB 8826 / WCFS1) (Lactobacillus plantarum).